The chain runs to 527 residues: Catalase (527 aa).

At Ala-2 the chain carries N-acetylalanine. A Phosphoserine modification is found at Ser-9. Residue Lys-13 is modified to N6-succinyllysine. Active-site residues include His-75 and Asn-148. 4 residues coordinate NADP(+): His-194, Ser-201, Arg-203, and Asn-213. At Lys-221 the chain carries N6-succinyllysine. Lys-233 carries the N6-acetyllysine modification. Lys-237, Trp-303, His-305, and Lys-306 together coordinate NADP(+). The residue at position 306 (Lys-306) is an N6-acetyllysine; alternate. The residue at position 306 (Lys-306) is an N6-succinyllysine; alternate. Tyr-358 provides a ligand contact to heme. Phosphoserine is present on residues Ser-417 and Ser-422. Lys-480 bears the N6-acetyllysine; alternate mark. Lys-480 bears the N6-succinyllysine; alternate mark. An N6-acetyllysine modification is found at Lys-499. Residue Thr-511 is modified to Phosphothreonine. Residues Ser-515 and Ser-517 each carry the phosphoserine modification. A Microbody targeting signal; atypical motif is present at residues 524-527 (KANL).

The protein belongs to the catalase family. As to quaternary structure, homotetramer. Interacts (via microbody targeting signal) with PEX5, monomeric form interacts with PEX5, leading to its translocation into peroxisomes. Heme serves as cofactor. The cofactor is NADP(+).

It is found in the peroxisome matrix. The catalysed reaction is 2 H2O2 = O2 + 2 H2O. Its function is as follows. Catalyzes the degradation of hydrogen peroxide (H(2)O(2)) generated by peroxisomal oxidases to water and oxygen, thereby protecting cells from the toxic effects of hydrogen peroxide. Promotes growth of cells including T-cells, B-cells, myeloid leukemia cells, melanoma cells, mastocytoma cells and normal and transformed fibroblast cells. In Pongo abelii (Sumatran orangutan), this protein is Catalase (CAT).